Here is a 424-residue protein sequence, read N- to C-terminus: Trigger factor (424 aa).

The region spanning 163 to 248 (GDTVVLDFEG…IHEIKAKELP (86 aa)) is the PPIase FKBP-type domain.

It belongs to the FKBP-type PPIase family. Tig subfamily.

Its subcellular location is the cytoplasm. The catalysed reaction is [protein]-peptidylproline (omega=180) = [protein]-peptidylproline (omega=0). Functionally, involved in protein export. Acts as a chaperone by maintaining the newly synthesized protein in an open conformation. Functions as a peptidyl-prolyl cis-trans isomerase. The protein is Trigger factor of Bacillus licheniformis (strain ATCC 14580 / DSM 13 / JCM 2505 / CCUG 7422 / NBRC 12200 / NCIMB 9375 / NCTC 10341 / NRRL NRS-1264 / Gibson 46).